Here is a 191-residue protein sequence, read N- to C-terminus: Peptidyl-tRNA hydrolase (191 aa).

Tyrosine 17 is a tRNA binding site. Histidine 22 (proton acceptor) is an active-site residue. TRNA-binding residues include tyrosine 68, asparagine 70, and asparagine 116.

The protein belongs to the PTH family. As to quaternary structure, monomer.

Its subcellular location is the cytoplasm. It catalyses the reaction an N-acyl-L-alpha-aminoacyl-tRNA + H2O = an N-acyl-L-amino acid + a tRNA + H(+). Functionally, hydrolyzes ribosome-free peptidyl-tRNAs (with 1 or more amino acids incorporated), which drop off the ribosome during protein synthesis, or as a result of ribosome stalling. Catalyzes the release of premature peptidyl moieties from peptidyl-tRNA molecules trapped in stalled 50S ribosomal subunits, and thus maintains levels of free tRNAs and 50S ribosomes. The protein is Peptidyl-tRNA hydrolase of Mycobacterium ulcerans (strain Agy99).